Reading from the N-terminus, the 215-residue chain is Probable glutathione S-transferase GSTF2 (215 aa).

Residues 2–83 (APMKLYGSTL…YVCRKNKPEL (82 aa)) enclose the GST N-terminal domain. Glutathione contacts are provided by residues S12, 41–42 (HK), 54–55 (QV), and 67–68 (ES). Positions 88-215 (DLKESAMVDV…KVASLMKPPA (128 aa)) constitute a GST C-terminal domain.

This sequence belongs to the GST superfamily. Phi family. Constitutively expressed in roots. Expressed in anthers, callus, panicles, sheaths and stems (at protein level).

The catalysed reaction is RX + glutathione = an S-substituted glutathione + a halide anion + H(+). Conjugation of reduced glutathione to a wide number of exogenous and endogenous hydrophobic electrophiles. In Oryza sativa subsp. japonica (Rice), this protein is Probable glutathione S-transferase GSTF2 (GSTF2).